Consider the following 363-residue polypeptide: UDP-3-O-acylglucosamine N-acyltransferase (363 aa).

Histidine 259 acts as the Proton acceptor in catalysis.

This sequence belongs to the transferase hexapeptide repeat family. LpxD subfamily. Homotrimer.

It carries out the reaction a UDP-3-O-[(3R)-3-hydroxyacyl]-alpha-D-glucosamine + a (3R)-hydroxyacyl-[ACP] = a UDP-2-N,3-O-bis[(3R)-3-hydroxyacyl]-alpha-D-glucosamine + holo-[ACP] + H(+). Its pathway is bacterial outer membrane biogenesis; LPS lipid A biosynthesis. Its function is as follows. Catalyzes the N-acylation of UDP-3-O-acylglucosamine using 3-hydroxyacyl-ACP as the acyl donor. Is involved in the biosynthesis of lipid A, a phosphorylated glycolipid that anchors the lipopolysaccharide to the outer membrane of the cell. The chain is UDP-3-O-acylglucosamine N-acyltransferase from Ruegeria pomeroyi (strain ATCC 700808 / DSM 15171 / DSS-3) (Silicibacter pomeroyi).